The following is a 1400-amino-acid chain: DNA-directed RNA polymerase subunit beta' (1400 aa).

Residues C70, C72, C85, and C88 each contribute to the Zn(2+) site. D460, D462, and D464 together coordinate Mg(2+). Zn(2+)-binding residues include C814, C888, C895, and C898.

The protein belongs to the RNA polymerase beta' chain family. The RNAP catalytic core consists of 2 alpha, 1 beta, 1 beta' and 1 omega subunit. When a sigma factor is associated with the core the holoenzyme is formed, which can initiate transcription. Mg(2+) serves as cofactor. Requires Zn(2+) as cofactor.

It catalyses the reaction RNA(n) + a ribonucleoside 5'-triphosphate = RNA(n+1) + diphosphate. In terms of biological role, DNA-dependent RNA polymerase catalyzes the transcription of DNA into RNA using the four ribonucleoside triphosphates as substrates. The sequence is that of DNA-directed RNA polymerase subunit beta' from Vibrio vulnificus (strain CMCP6).